Consider the following 453-residue polypeptide: Ankyrin repeat and SOCS box protein 16 (453 aa).

ANK repeat units lie at residues 56 to 85, 110 to 139, 142 to 171, 175 to 204, 209 to 238, 242 to 279, and 283 to 312; these read CRDP…AANM, KQTA…ELDA, GGRA…KANV, EGTT…TVNL, SQET…DVGL, QGET…DARA, and KRHT…RAEV. Residues 398 to 450 enclose the SOCS box domain; the sequence is YSSALCMVNQPRQLQHLARLAVRARLGSRCRQGATRLPLPPLLRDYLLLRVEG.

This sequence belongs to the ankyrin SOCS box (ASB) family.

It participates in protein modification; protein ubiquitination. Functionally, may be a substrate-recognition component of a SCF-like ECS (Elongin-Cullin-SOCS-box protein) E3 ubiquitin-protein ligase complex which mediates the ubiquitination and subsequent proteasomal degradation of target proteins. In Homo sapiens (Human), this protein is Ankyrin repeat and SOCS box protein 16 (ASB16).